We begin with the raw amino-acid sequence, 135 residues long: Large ribosomal subunit protein uL16 (135 aa).

It belongs to the universal ribosomal protein uL16 family. Part of the 50S ribosomal subunit.

Binds 23S rRNA and is also seen to make contacts with the A and possibly P site tRNAs. The sequence is that of Large ribosomal subunit protein uL16 from Desulfatibacillum aliphaticivorans.